The following is a 431-amino-acid chain: Glutamyl-tRNA(Gln) amidotransferase subunit A (431 aa).

Catalysis depends on charge relay system residues lysine 37 and serine 112. The active-site Acyl-ester intermediate is serine 136.

Belongs to the amidase family. GatA subfamily. Heterotrimer of A, B and C subunits.

The catalysed reaction is L-glutamyl-tRNA(Gln) + L-glutamine + ATP + H2O = L-glutaminyl-tRNA(Gln) + L-glutamate + ADP + phosphate + H(+). Allows the formation of correctly charged Gln-tRNA(Gln) through the transamidation of misacylated Glu-tRNA(Gln) in organisms which lack glutaminyl-tRNA synthetase. The reaction takes place in the presence of glutamine and ATP through an activated gamma-phospho-Glu-tRNA(Gln). The polypeptide is Glutamyl-tRNA(Gln) amidotransferase subunit A (Methanospirillum hungatei JF-1 (strain ATCC 27890 / DSM 864 / NBRC 100397 / JF-1)).